Consider the following 780-residue polypeptide: ATP-dependent 6-phosphofructokinase, muscle type (780 aa).

Thr2 bears the N-acetylthreonine mark. Residues 2–390 (THEEHHATKT…NWEVYKLLAH (389 aa)) form an N-terminal catalytic PFK domain 1 region. Residues Gly25, 88 to 89 (RC), and 118 to 121 (GDGS) contribute to the ATP site. Asp119 provides a ligand contact to Mg(2+). Ser133 is subject to Phosphoserine. Substrate is bound by residues 164–166 (SID), Arg201, 208–210 (MGR), Glu264, Arg292, and 298–301 (HVQR). The active-site Proton acceptor is Asp166. Ser377 is subject to Phosphoserine. The interval 391–401 (VRPPVSKSGSH) is interdomain linker. The tract at residues 402 to 780 (TVAVMNVGAP…TRKRSGEAAV (379 aa)) is C-terminal regulatory PFK domain 2. Residues Arg471 and 528-532 (TVSNN) contribute to the beta-D-fructose 2,6-bisphosphate site. Ser530 is a glycosylation site (O-linked (GlcNAc) serine). The residue at position 557 (Lys557) is an N6-(2-hydroxyisobutyryl)lysine. Beta-D-fructose 2,6-bisphosphate contacts are provided by residues Arg566, 573–575 (MGG), Glu629, Arg655, and 661–664 (HMQQ). Ser667 is subject to Phosphoserine. Arg735 provides a ligand contact to beta-D-fructose 2,6-bisphosphate. Ser775 carries the post-translational modification Phosphoserine.

The protein belongs to the phosphofructokinase type A (PFKA) family. ATP-dependent PFK group I subfamily. Eukaryotic two domain clade 'E' sub-subfamily. In terms of assembly, homo- and heterotetramers. Phosphofructokinase (PFK) enzyme functions as a tetramer composed of different combinations of 3 types of subunits, called PFKM (M), PFKL (L) and PFKP (P). The composition of the PFK tetramer differs according to the tissue type it is present in. The kinetic and regulatory properties of the tetrameric enzyme are dependent on the subunit composition, hence can vary across tissues. Interacts (via C-terminus) with HK1 (via N-terminal spermatogenic cell-specific region). Mg(2+) is required as a cofactor. In terms of processing, glcNAcylation decreases enzyme activity.

It localises to the cytoplasm. It catalyses the reaction beta-D-fructose 6-phosphate + ATP = beta-D-fructose 1,6-bisphosphate + ADP + H(+). The protein operates within carbohydrate degradation; glycolysis; D-glyceraldehyde 3-phosphate and glycerone phosphate from D-glucose: step 3/4. Its activity is regulated as follows. Allosterically activated by ADP, AMP, or fructose 2,6-bisphosphate, and allosterically inhibited by ATP or citrate. In terms of biological role, catalyzes the phosphorylation of D-fructose 6-phosphate to fructose 1,6-bisphosphate by ATP, the first committing step of glycolysis. The sequence is that of ATP-dependent 6-phosphofructokinase, muscle type (PFKM) from Pongo abelii (Sumatran orangutan).